Reading from the N-terminus, the 221-residue chain is Adenylate kinase (221 aa).

ATP is bound at residue 10 to 15 (GAGKGT). The NMP stretch occupies residues 30–59 (STGDMLRAAVKAGTPLGLEAKRYMDAGELV). Residues threonine 31, arginine 36, 57-59 (ELV), 85-88 (GFPR), and glutamine 92 contribute to the AMP site. The LID stretch occupies residues 122 to 159 (GRRMHPASGRTYHVKFNPPKVEGVDDVTGEPLIQRDDD). ATP contacts are provided by residues arginine 123 and 132–133 (TY). 2 residues coordinate AMP: arginine 156 and arginine 167. Residue glycine 207 coordinates ATP.

The protein belongs to the adenylate kinase family. Monomer.

The protein resides in the cytoplasm. It carries out the reaction AMP + ATP = 2 ADP. It participates in purine metabolism; AMP biosynthesis via salvage pathway; AMP from ADP: step 1/1. In terms of biological role, catalyzes the reversible transfer of the terminal phosphate group between ATP and AMP. Plays an important role in cellular energy homeostasis and in adenine nucleotide metabolism. This chain is Adenylate kinase, found in Paraburkholderia phymatum (strain DSM 17167 / CIP 108236 / LMG 21445 / STM815) (Burkholderia phymatum).